The following is a 122-amino-acid chain: UPF0102 protein Atu0303 (122 aa).

It belongs to the UPF0102 family.

The protein is UPF0102 protein Atu0303 of Agrobacterium fabrum (strain C58 / ATCC 33970) (Agrobacterium tumefaciens (strain C58)).